We begin with the raw amino-acid sequence, 267 residues long: 27 kDa core protein (267 aa).

This sequence belongs to the chordopoxvirinae D3 family.

Its subcellular location is the virion. Functionally, late protein which is part of a large complex required for early virion morphogenesis. This complex participates in the formation of virosomes and the incorporation of virosomal contents into nascent immature virions. The protein is 27 kDa core protein of Canarypox virus (CNPV).